Consider the following 551-residue polypeptide: Transcription factor 7-like 1-B (551 aa).

Residues 1–11 (MPQLNGGGGDE) are compositionally biased toward gly residues. Disordered regions lie at residues 1-76 (MPQL…DLES), 298-326 (QEPNGELSPPVNTKSPGPNKKDEDKKPHI), and 392-525 (GWSA…PPSP). The span at 19-32 (ISFKDEGEQEDKIS) shows a compositional bias: basic and acidic residues. Over residues 46–61 (SSLVSESENNSSSSDS) the composition is skewed to low complexity. Basic and acidic residues predominate over residues 63–76 (QTERRPQPRADLES). Residues 326 to 394 (IKKPLNAFML…LHSQLYPGWS (69 aa)) constitute a DNA-binding region (HMG box). A compositionally biased stretch (low complexity) spans 449 to 468 (SPATPSAALASPAAPAATHS). Polar residues predominate over residues 469–478 (EQAQPLSLTT). The span at 493–505 (SSSSSSSSSSSGL) shows a compositional bias: low complexity.

This sequence belongs to the TCF/LEF family. Interacts with ctnnb1.

Its subcellular location is the nucleus. In terms of biological role, participates in the Wnt signaling pathway. Probably binds to DNA and acts as a repressor in the absence of ctnnb1, and possibly as an activator in its presence. Regulates anterior-posterior patterning in the neuroectoderm by repressing posterior neural fates. Also required for hindbrain morphogenesis. The protein is Transcription factor 7-like 1-B (tcf7l1b) of Danio rerio (Zebrafish).